The chain runs to 341 residues: Spore photoproduct lyase (341 aa).

The Radical SAM core domain maps to S76–R304. C90, C94, and C97 together coordinate [4Fe-4S] cluster. The H-T-H motif DNA-binding region spans Q217 to A234.

This sequence belongs to the radical SAM superfamily. SPL family. In terms of assembly, monomer or homodimer. It depends on [4Fe-4S] cluster as a cofactor. The cofactor is S-adenosyl-L-methionine.

It catalyses the reaction (5R)-5,6-dihydro-5-(thymidin-7-yl)thymidine in DNA = a thymidine dimer in DNA. Involved in repair of UV radiation-induced DNA damage during spore germination. Can repair thymine dimer 5-thyminyl-5,6-dihydrothymine (known as spore photoproduct (SP)) by in situ monomerization of SP to two thymines. This chain is Spore photoproduct lyase (splG), found in Geobacillus sp. (strain Y412MC61).